Reading from the N-terminus, the 330-residue chain is ADP-L-glycero-D-manno-heptose-6-epimerase (330 aa).

Residues 11-12 (FI), 32-33 (DN), Lys39, Lys54, 75-79 (EGACS), and Asn92 contribute to the NADP(+) site. The Proton acceptor role is filled by Tyr139. Lys143 provides a ligand contact to NADP(+). Position 168 (Asn168) interacts with substrate. Positions 169 and 177 each coordinate NADP(+). The active-site Proton acceptor is Lys177. Substrate-binding positions include Arg179, His186, 200-203 (FGEY), Arg213, and Tyr292.

Belongs to the NAD(P)-dependent epimerase/dehydratase family. HldD subfamily. Homopentamer. It depends on NADP(+) as a cofactor.

It catalyses the reaction ADP-D-glycero-beta-D-manno-heptose = ADP-L-glycero-beta-D-manno-heptose. Its pathway is nucleotide-sugar biosynthesis; ADP-L-glycero-beta-D-manno-heptose biosynthesis; ADP-L-glycero-beta-D-manno-heptose from D-glycero-beta-D-manno-heptose 7-phosphate: step 4/4. Catalyzes the interconversion between ADP-D-glycero-beta-D-manno-heptose and ADP-L-glycero-beta-D-manno-heptose via an epimerization at carbon 6 of the heptose. This chain is ADP-L-glycero-D-manno-heptose-6-epimerase, found in Paraburkholderia phytofirmans (strain DSM 17436 / LMG 22146 / PsJN) (Burkholderia phytofirmans).